The following is a 429-amino-acid chain: Putative GMP synthase [glutamine-hydrolyzing] (429 aa).

Residues 10 to 118 (TIFILDFGSQ…GYTPIHLYPC (109 aa)) enclose the Glutamine amidotransferase type-1 domain. The active-site Nucleophile is Cys87. Residues 119-304 (ELFKHIVDCE…LGLSSYLLDR (186 aa)) form the GMPS ATP-PPase domain. Active-site residues include His176 and Glu178.

Homodimer.

The enzyme catalyses XMP + L-glutamine + ATP + H2O = GMP + L-glutamate + AMP + diphosphate + 2 H(+). It functions in the pathway purine metabolism; GMP biosynthesis; GMP from XMP (L-Gln route): step 1/1. Its function is as follows. Catalyzes the synthesis of GMP from XMP. The protein is Putative GMP synthase [glutamine-hydrolyzing] (guaA) of Chlamydia pneumoniae (Chlamydophila pneumoniae).